We begin with the raw amino-acid sequence, 113 residues long: Protein C21/B27 (113 aa).

The sequence is that of Protein C21/B27 from Homo sapiens (Human).